We begin with the raw amino-acid sequence, 417 residues long: Putative transporter AmpG 1 (417 aa).

Helical transmembrane passes span 7–27, 42–62, 78–98, 104–124, 143–163, 171–191, 225–245, 273–293, 301–321, 328–348, 366–386, and 389–409; these read LCIIWLFGLISGFNLMITGNT, IGILSFITLPYSINFLLAPIF, LSWICLTSSALIFLIYIFSFL, LLLFAFTALIISFFSAAQDTI, GIYIFGYRVGMLLAGSGAIYL, EIYKIFAGLVFIYLILLIVGI, ALKPIGSVYFIILILIFLVLY, VGKFCGVVGAIIGGLVGGVIM, SIFLFGIIHALGHILFIFLEI, LLFITIGIASITGGMTMTAYI, FLSSMMGISRSIFPIISGYMV, and FGWQNFFLFTTIITIPSLLIL.

It belongs to the major facilitator superfamily.

The protein resides in the cell inner membrane. The protein is Putative transporter AmpG 1 (ampG1) of Rickettsia conorii (strain ATCC VR-613 / Malish 7).